A 311-amino-acid polypeptide reads, in one-letter code: GTPase Era (311 aa).

An Era-type G domain is found at 18 to 185 (RSGFVALIGA…AKYLAESVPN (168 aa)). The G1 stretch occupies residues 26–33 (GAPNAGKS). 26–33 (GAPNAGKS) contacts GTP. Residues 52-56 (QTTRA) are G2. The tract at residues 73–76 (DTPG) is G3. Residues 73 to 77 (DTPGI) and 135 to 138 (NKVD) each bind GTP. A G4 region spans residues 135–138 (NKVD). The G5 stretch occupies residues 164 to 166 (ISA). The region spanning 216–293 (LHEELPYAST…HLFLFVKVRE (78 aa)) is the KH type-2 domain.

This sequence belongs to the TRAFAC class TrmE-Era-EngA-EngB-Septin-like GTPase superfamily. Era GTPase family. As to quaternary structure, monomer.

The protein localises to the cytoplasm. The protein resides in the cell inner membrane. Its function is as follows. An essential GTPase that binds both GDP and GTP, with rapid nucleotide exchange. Plays a role in 16S rRNA processing and 30S ribosomal subunit biogenesis and possibly also in cell cycle regulation and energy metabolism. The sequence is that of GTPase Era from Brucella suis biovar 1 (strain 1330).